The chain runs to 190 residues: Potassium-transporting ATPase KdpC subunit (190 aa).

Residues 10-30 form a helical membrane-spanning segment; sequence VLFAVLTLICGVIYPYAITGI.

This sequence belongs to the KdpC family. In terms of assembly, the system is composed of three essential subunits: KdpA, KdpB and KdpC.

It is found in the cell inner membrane. In terms of biological role, part of the high-affinity ATP-driven potassium transport (or Kdp) system, which catalyzes the hydrolysis of ATP coupled with the electrogenic transport of potassium into the cytoplasm. This subunit acts as a catalytic chaperone that increases the ATP-binding affinity of the ATP-hydrolyzing subunit KdpB by the formation of a transient KdpB/KdpC/ATP ternary complex. This Herminiimonas arsenicoxydans protein is Potassium-transporting ATPase KdpC subunit.